A 171-amino-acid chain; its full sequence is MKRQQSFEYDELVACGKGELYGPAFPSLPSDNMLMIDRVIEISSEGGEHGKGFIHAELDINPDLWFFDCHFKGDPVMPGCLGLDAMWQLVGFFLGWQGGEGKGRALGVGEVKFTGQILPTAKKVTYDIQLKRVINRKLVMGVADGRVLVDGKEIYVAKDLKVGLFTDTTNF.

Residue His70 is part of the active site.

The protein belongs to the thioester dehydratase family. FabA subfamily. As to quaternary structure, homodimer.

It is found in the cytoplasm. The enzyme catalyses a (3R)-hydroxyacyl-[ACP] = a (2E)-enoyl-[ACP] + H2O. It carries out the reaction (3R)-hydroxydecanoyl-[ACP] = (2E)-decenoyl-[ACP] + H2O. The catalysed reaction is (2E)-decenoyl-[ACP] = (3Z)-decenoyl-[ACP]. Its pathway is lipid metabolism; fatty acid biosynthesis. Its function is as follows. Necessary for the introduction of cis unsaturation into fatty acids. Catalyzes the dehydration of (3R)-3-hydroxydecanoyl-ACP to E-(2)-decenoyl-ACP and then its isomerization to Z-(3)-decenoyl-ACP. Can catalyze the dehydratase reaction for beta-hydroxyacyl-ACPs with saturated chain lengths up to 16:0, being most active on intermediate chain length. This is 3-hydroxydecanoyl-[acyl-carrier-protein] dehydratase from Photobacterium profundum (strain SS9).